The sequence spans 92 residues: Small ribosomal subunit protein bS20 (92 aa).

Positions 1-25 (MANSAQARKRARQAAKANSHNSALR) are disordered.

The protein belongs to the bacterial ribosomal protein bS20 family.

Its function is as follows. Binds directly to 16S ribosomal RNA. The chain is Small ribosomal subunit protein bS20 from Paraburkholderia phymatum (strain DSM 17167 / CIP 108236 / LMG 21445 / STM815) (Burkholderia phymatum).